Consider the following 9159-residue polypeptide: Halomucin (9159 aa).

The signal sequence occupies residues 1 to 30 (MSQTAKPIFAVVVALIVLISGVAFIGSVSA). C-type lectin domains follow at residues 644–776 (TTGN…YLVE) and 929–1060 (YDGH…VEYG). Residues 1310 to 1332 (QPQTVNDPDAVSTRNNNVGSNGL) show a composition bias toward polar residues. The segment at 1310–1351 (QPQTVNDPDAVSTRNNNVGSNGLDSKIEDDQNNGADGNPHGT) is disordered. A V-G-G-L motif-rich region region spans residues 1756-3380 (VGGLIGESSG…GFNGEHVGGL (1625 aa)). 8 disordered regions span residues 3484-3514 (GATA…PAPQ), 4878-4912 (ESYW…TTPA), 6570-6589 (TDSA…SSGQ), 7047-7097 (TPTV…GINT), 7660-7702 (ATDS…NPGG), 7888-7923 (IDGD…EPAL), 8212-8237 (STQQ…GAAD), and 8369-8614 (DSTA…GSST). The span at 3495 to 3505 (GTPGGATGYGS) shows a compositional bias: gly residues. A compositionally biased stretch (basic and acidic residues) spans 4880 to 4890 (YWDKGATDKSD). 2 stretches are compositionally biased toward polar residues: residues 7048–7057 (PTVTINSSSD) and 7068–7078 (GEDSTSSNESS). Residues 7079 to 7092 (DGTESDQGDPEDDI) are compositionally biased toward acidic residues. The span at 7681–7698 (VTGSTPTFVSSGTVTTPE) shows a compositional bias: polar residues. Positions 7686-7793 (PTFVSSGTVT…ITDVDEQPTG (108 aa)) constitute a Cadherin domain. Composition is skewed to acidic residues over residues 7888–7898 (IDGDGLADDNE) and 7905–7920 (DNDD…EDQE). The segment covering 8378-8390 (ALEDDSSNQDSGD) has biased composition (acidic residues). Low complexity-rich tracts occupy residues 8391-8529 (DSSN…SSQN) and 8538-8548 (SAAAVGAESGS). Gly residues-rich tracts occupy residues 8549 to 8566 (EMGG…GDGS) and 8574 to 8608 (AGGG…GSSS).

Post-translationally, probably glycosylated with sugar containing sialic acid. This may further contribute to its overall negative charge, thereby creating an aqueous shield covering the cells.

The protein localises to the secreted. In terms of biological role, may protect the organism from desiccation stress. May also contribute to the rigidity and maintenance of the unique square cell morphology of H.walsbyi. The sequence is that of Halomucin (hmu) from Haloquadratum walsbyi (strain DSM 16790 / HBSQ001).